The sequence spans 376 residues: MTAATLFESTDGTVVLLDLPRSIEDAQQHPAAVTLPEAPSLVTNSCRDGTSWTRRLISSPPPETPFVTPEPKNGPSPLPAAAQVAQLMIQASVTGALEELRTNYSGPYLLPRQLSPQRMIADGGKAVDDYKSPHACDLESCSTTAEDATKGRYYFPPESHHVLGTIQETKTLLLQSAPNFNVIVLDPPWPNRSAKRKKGGYKVATTTDDIRALLSDVPIPSLLARDGLVAIWVTNKPAFLDMLTSPRDGILSEWGLELVGEWSWLKITTSAEPILPIDSAHRKPWEPLLIAQRKGSKRVFPPFWRRRVIVSVPDTHSRKPNIRDLVNPMLPPRSRGLEIFARNLTAGWWAWGDDVLHFQERSNWVMAESKSPATGC.

Residues 53–78 form a disordered region; it reads TRRLISSPPPETPFVTPEPKNGPSPL.

It belongs to the MT-A70-like family.

The catalysed reaction is an adenosine in mRNA + S-adenosyl-L-methionine = an N(6)-methyladenosine in mRNA + S-adenosyl-L-homocysteine + H(+). Its function is as follows. N6-methyladenosine RNA methyltransferase that plays a crucial role in fungal phenotypic traits, virulence, and stress tolerance. Mediates the methylation of mRNAs to produce N6-methyladenosine (m6A)-containing mRNAs. M6A is a modification present at internal sites of mRNAs and some non-coding RNAs and plays a role in mRNA stability and processing. Required for appressorium turgor pressure and regulates autophagosome formation during appressorium formation stage. Specifically, mediates the stability of ATG8 mRNA in a m6A-dependent manner via modification of the m6A site A982 located in 3'UTR region. The sequence is that of N6-methyladenosine RNA methyltransferase MTA1 from Pyricularia oryzae (strain 70-15 / ATCC MYA-4617 / FGSC 8958) (Rice blast fungus).